Reading from the N-terminus, the 113-residue chain is Protein Asterix (113 aa).

The chain crosses the membrane as a helical span at residues 81 to 97 (IVSSFMLSVSAVVMSYL).

It belongs to the Asterix family.

The protein localises to the membrane. This is Protein Asterix from Caenorhabditis elegans.